The sequence spans 378 residues: Mannitol-1-phosphate 5-dehydrogenase (378 aa).

4–15 (SVHFGAGNIGRG) lines the NAD(+) pocket.

This sequence belongs to the mannitol dehydrogenase family.

It catalyses the reaction D-mannitol 1-phosphate + NAD(+) = beta-D-fructose 6-phosphate + NADH + H(+). In Streptococcus pneumoniae (strain 70585), this protein is Mannitol-1-phosphate 5-dehydrogenase.